We begin with the raw amino-acid sequence, 158 residues long: NADH-quinone oxidoreductase subunit B (158 aa).

[4Fe-4S] cluster is bound by residues C36, C37, C101, and C131.

It belongs to the complex I 20 kDa subunit family. As to quaternary structure, NDH-1 is composed of 14 different subunits. Subunits NuoB, C, D, E, F, and G constitute the peripheral sector of the complex. Requires [4Fe-4S] cluster as cofactor.

Its subcellular location is the cell inner membrane. It catalyses the reaction a quinone + NADH + 5 H(+)(in) = a quinol + NAD(+) + 4 H(+)(out). NDH-1 shuttles electrons from NADH, via FMN and iron-sulfur (Fe-S) centers, to quinones in the respiratory chain. The immediate electron acceptor for the enzyme in this species is believed to be ubiquinone. Couples the redox reaction to proton translocation (for every two electrons transferred, four hydrogen ions are translocated across the cytoplasmic membrane), and thus conserves the redox energy in a proton gradient. The polypeptide is NADH-quinone oxidoreductase subunit B (Francisella philomiragia subsp. philomiragia (strain ATCC 25017 / CCUG 19701 / FSC 153 / O#319-036)).